The sequence spans 1253 residues: Guanine nucleotide exchange factor SDC25 (1253 aa).

Residues 26 to 98 (QPIDVVECTY…PPSFTRSILN (73 aa)) enclose the SH3 domain. Residues 624-649 (LNLDNAKDKKNGSQNTDIQEEEDEYE) are disordered. The 133-residue stretch at 782-914 (GPIVRIKGGS…ELLKEVNQKF (133 aa)) folds into the N-terminal Ras-GEF domain. The region spanning 952-1199 (VDPVLFATQL…QYQLSLIIEP (248 aa)) is the Ras-GEF domain. The tract at residues 1202-1253 (RKKVVPNSNSNNKSQEKSRDDQTDEGKTSTKKDRFPKFQLHKTKKKAPKVSK) is disordered. Residues 1215–1237 (SQEKSRDDQTDEGKTSTKKDRFP) are compositionally biased toward basic and acidic residues. The segment covering 1240–1253 (QLHKTKKKAPKVSK) has biased composition (basic residues).

Functionally, promotes the exchange of Ras-bound GDP by GTP. This is Guanine nucleotide exchange factor SDC25 (SDC25) from Saccharomyces cerevisiae (Baker's yeast).